The chain runs to 134 residues: MIMPQSRLDVADNSGAREIMCIRVLNSGIGGKGLTTGGGGNKRYAHVGDIIVASVKDAAPRGAVKAGDVVKAVVVRTSHAIKRADGSTIRFDKNAAVIINNQGEPRGTRVFGPVARELRDRRFMKIVSLAPEVL.

It belongs to the universal ribosomal protein uL14 family. In terms of assembly, part of the 50S ribosomal subunit. Forms a cluster with proteins L3 and L19. In the 70S ribosome, L14 and L19 interact and together make contacts with the 16S rRNA in bridges B5 and B8.

In terms of biological role, binds to 23S rRNA. Forms part of two intersubunit bridges in the 70S ribosome. The sequence is that of Large ribosomal subunit protein uL14 from Deinococcus deserti (strain DSM 17065 / CIP 109153 / LMG 22923 / VCD115).